Consider the following 209-residue polypeptide: U1 small nuclear ribonucleoprotein C (209 aa).

The segment at 4–36 (HYCDYCDVFLTHDSASVRKAHNSGRNHLANVRD) adopts a Matrin-type zinc-finger fold. Low complexity predominate over residues 72–87 (PQHLQAPPQGGFAPPM). A disordered region spans residues 72–209 (PQHLQAPPQG…RARMMGPGGR (138 aa)). Composition is skewed to pro residues over residues 93-150 (GGFP…PFPP) and 159-191 (PGAPSFPPPPGGFNGPPPPSGQNSQGPPPPTNP).

Belongs to the U1 small nuclear ribonucleoprotein C family. U1 snRNP is composed of the 7 core Sm proteins B/B', D1, D2, D3, E, F and G that assemble in a heptameric protein ring on the Sm site of the small nuclear RNA to form the core snRNP, and at least 3 U1 snRNP-specific proteins U1-70K, U1-A and U1-C. U1-C interacts with U1 snRNA and the 5' splice-site region of the pre-mRNA.

The protein resides in the nucleus. Component of the spliceosomal U1 snRNP, which is essential for recognition of the pre-mRNA 5' splice-site and the subsequent assembly of the spliceosome. U1-C is directly involved in initial 5' splice-site recognition for both constitutive and regulated alternative splicing. The interaction with the 5' splice-site seems to precede base-pairing between the pre-mRNA and the U1 snRNA. Stimulates commitment or early (E) complex formation by stabilizing the base pairing of the 5' end of the U1 snRNA and the 5' splice-site region. The chain is U1 small nuclear ribonucleoprotein C from Coprinopsis cinerea (strain Okayama-7 / 130 / ATCC MYA-4618 / FGSC 9003) (Inky cap fungus).